The primary structure comprises 439 residues: Trehalose-phosphatase (439 aa).

Residues Asp-163 and Asp-165 each coordinate Mg(2+). Residue Asp-165 is the Proton donor/acceptor of the active site. Residue 282-284 (QRK) coordinates substrate. Asp-373 is a Mg(2+) binding site.

The protein belongs to the gob-1 trehalose phosphatase family. It depends on Mg(2+) as a cofactor. As to expression, ubiquitously expressed. Strong expression in intestine.

The catalysed reaction is alpha,alpha-trehalose 6-phosphate + H2O = alpha,alpha-trehalose + phosphate. Catalyzes the hydrolysis of trehalose 6-phosphate to trehalose and phosphate; prevents the accumulation of toxic levels of trehalose 6-phosphate. This is Trehalose-phosphatase from Caenorhabditis elegans.